We begin with the raw amino-acid sequence, 347 residues long: Endophilin-A3 (347 aa).

The segment at 1–21 (MSVAGLKKQFHKASQLFSEKI) is membrane-binding amphipathic helix. Residues 18-249 (SEKISGAEGT…LELRIALASQ (232 aa)) enclose the BAR domain. The required for dimerization upon membrane association stretch occupies residues 60 to 87 (PNPAYRAKLGMLNTMSKLRGQVKATGYP). The stretch at 180 to 201 (EEEIRQAVEKFEESKELAERSM) forms a coiled coil. Positions 218–254 (FVEAALDYHRQSTEILQELQNKLELRIALASQVPRRD) are interaction with ARC. The interval 255–284 (YMPKPVNTSSTNANGVEPSSSSKLTGTDIP) is disordered. A compositionally biased stretch (polar residues) spans 260-284 (VNTSSTNANGVEPSSSSKLTGTDIP). An SH3 domain is found at 285–344 (SDQPCCRGLYDFEPENEGELGFKEGDIITLTNQIDENWYEGMLRGESGFFPINYVEVIVP).

It belongs to the endophilin family. As to quaternary structure, interacts with SGIP1 and DYDC1. Interacts with FASLG. Interacts with ATXN2. Interacts with BIN2. Interacts with ARC, DNM1 and SYNJ1. In terms of tissue distribution, expressed at high level in testis and at lower level in brain and liver.

It is found in the cytoplasm. It localises to the early endosome membrane. In terms of biological role, implicated in endocytosis. May recruit other proteins to membranes with high curvature. The sequence is that of Endophilin-A3 (Sh3gl3) from Rattus norvegicus (Rat).